Reading from the N-terminus, the 153-residue chain is Small ribosomal subunit protein uS15 (153 aa).

It belongs to the universal ribosomal protein uS15 family. As to quaternary structure, part of the 30S ribosomal subunit.

The protein is Small ribosomal subunit protein uS15 of Sulfolobus acidocaldarius (strain ATCC 33909 / DSM 639 / JCM 8929 / NBRC 15157 / NCIMB 11770).